Consider the following 264-residue polypeptide: MRLRPLPLVVVPGLLQLLFCDSKEVVHATEGLDWEDKDAPGTLVGNVVHSRIISPLRLFVKQSPVPKPGPMAYADSMENFWDWLANITEIQEPLARTKRRPIVKTGKFKKMFGWGDFHSNIKTVKLNLLITGKIVDHGNGTFSVYFRHNSTGLGNVSVSLVPPSKVVEFEVSPQSTLETKESKSFNCRIEYEKTDRAKKTALCNFDPSKICYQEQTQSHVSWLCSKPFKVICIYIAFYSVDYKLVQKVCPDYNYHSETPYLSSG.

The first 22 residues, 1–22 (MRLRPLPLVVVPGLLQLLFCDS), serve as a signal peptide directing secretion. Residues 23-90 (KEVVHATEGL…WDWLANITEI (68 aa)) form an II region. N-linked (GlcNAc...) asparagine glycosylation is found at Asn86, Asn139, Asn149, and Asn155. The III stretch occupies residues 91-169 (QEPLARTKRR…LVPPSKVVEF (79 aa)). The segment at 170-178 (EVSPQSTLE) is IV (linker domain). The v (Cys-rich) stretch occupies residues 179–264 (TKESKSFNCR…HSETPYLSSG (86 aa)).

It belongs to the neurexophilin family. Post-translationally, may be proteolytically processed at the boundary between the N-terminal non-conserved and the central conserved domain in neuron-like cells. As to expression, expressed in brain and kidney.

It is found in the secreted. May be signaling molecules that resemble neuropeptides and that act by binding to alpha-neurexins and possibly other receptors. This is Neurexophilin-2 (NXPH2) from Homo sapiens (Human).